A 140-amino-acid chain; its full sequence is Thioredoxin H9 (140 aa).

A lipid anchor (N-myristoyl glycine) is attached at Gly-2. Residue Cys-4 is the site of S-palmitoyl cysteine attachment. The residue at position 14 (Ser-14) is a Phosphoserine. The Thioredoxin domain maps to 25–129 (VHLITTKESW…PELQKKVTSI (105 aa)). Catalysis depends on nucleophile residues Cys-57 and Cys-60. A disulfide bond links Cys-57 and Cys-60. Ser-136 carries the phosphoserine modification.

The protein belongs to the thioredoxin family. Plant H-type subfamily. As to expression, ubiquitous.

It is found in the cell membrane. In terms of biological role, probable thiol-disulfide oxidoreductase that may play a role in intercellular communication due to its ability to move from cell to cell. This is Thioredoxin H9 (TRX9) from Arabidopsis thaliana (Mouse-ear cress).